The following is a 147-amino-acid chain: Large ribosomal subunit protein uL15 (147 aa).

The segment covering 1-20 (MTMHLNDLKPADGARTERTR) has biased composition (basic and acidic residues). The tract at residues 1 to 64 (MTMHLNDLKP…GGQTPMQRRL (64 aa)) is disordered. Over residues 23 to 33 (RGIGSGLGKTC) the composition is skewed to gly residues. Over residues 34-47 (GRGHKGSFARKGGG) the composition is skewed to basic residues.

The protein belongs to the universal ribosomal protein uL15 family. As to quaternary structure, part of the 50S ribosomal subunit.

Its function is as follows. Binds to the 23S rRNA. This Xanthomonas campestris pv. campestris (strain 8004) protein is Large ribosomal subunit protein uL15.